Consider the following 753-residue polypeptide: Probable phosphoenolpyruvate synthase (753 aa).

Histidine 398 acts as the Tele-phosphohistidine intermediate in catalysis. Substrate contacts are provided by arginine 488, arginine 535, glutamate 631, glycine 653, threonine 654, asparagine 655, and aspartate 656. Glutamate 631 is a binding site for Mg(2+). Mg(2+) is bound at residue aspartate 656. Cysteine 703 acts as the Proton donor in catalysis.

This sequence belongs to the PEP-utilizing enzyme family. Mg(2+) serves as cofactor.

The catalysed reaction is pyruvate + ATP + H2O = phosphoenolpyruvate + AMP + phosphate + 2 H(+). Its pathway is carbohydrate biosynthesis; gluconeogenesis. Functionally, catalyzes the phosphorylation of pyruvate to phosphoenolpyruvate. The chain is Probable phosphoenolpyruvate synthase (ppsA) from Archaeoglobus fulgidus (strain ATCC 49558 / DSM 4304 / JCM 9628 / NBRC 100126 / VC-16).